A 416-amino-acid polypeptide reads, in one-letter code: GTPase Obg (416 aa).

The Obg domain occupies 1 to 157 (MFQDVLVITV…RRLRLELMLI (157 aa)). 2 disordered regions span residues 25–44 (EKFVPKGGPDGGDGGRGGSV) and 62–82 (TYKAEDGEHGRGSQQHGRGGE). Residues 32–42 (GPDGGDGGRGG) are compositionally biased toward gly residues. The segment covering 63–72 (YKAEDGEHGR) has biased composition (basic and acidic residues). The region spanning 158–324 (ADVGLVGYPN…LKEALHALVR (167 aa)) is the OBG-type G domain. Residues 164 to 171 (GYPNAGKS), 189 to 193 (FTTLS), 211 to 214 (DIPG), 277 to 280 (NKVD), and 305 to 307 (SAL) contribute to the GTP site. Residues Ser171 and Thr191 each coordinate Mg(2+). In terms of domain architecture, OCT spans 336–414 (PRKEVQAGVE…IGGLEFEYIP (79 aa)).

This sequence belongs to the TRAFAC class OBG-HflX-like GTPase superfamily. OBG GTPase family. In terms of assembly, monomer. Requires Mg(2+) as cofactor.

Its subcellular location is the cytoplasm. Functionally, an essential GTPase which binds GTP, GDP and possibly (p)ppGpp with moderate affinity, with high nucleotide exchange rates and a fairly low GTP hydrolysis rate. Plays a role in control of the cell cycle, stress response, ribosome biogenesis and in those bacteria that undergo differentiation, in morphogenesis control. The chain is GTPase Obg from Thermus thermophilus (strain ATCC BAA-163 / DSM 7039 / HB27).